Consider the following 299-residue polypeptide: Methylsterol monooxygenase 1-2 (299 aa).

3 helical membrane-spanning segments follow: residues 39–59, 96–116, and 118–138; these read CHNI…LVFI, FILV…MIEI, and SGLP…YFLV. Positions 132–267 constitute a Fatty acid hydroxylase domain; that stretch reads LVVYFLVEDY…FTYCDYIYGT (136 aa). Residues 147 to 151 carry the Histidine box-1 motif; it reads HRFFH. A Histidine box-2 motif is present at residues 160–164; the sequence is HHIHH. The chain crosses the membrane as a helical span at residues 189 to 209; that stretch reads TFLGPAIAPGHMITFWLWIAL. A Histidine box-3 motif is present at residues 239–245; that stretch reads YHDYHHY.

The protein belongs to the sterol desaturase family. Interacts with ACBP1. Fe cation is required as a cofactor. In terms of tissue distribution, expressed in embryo sacs, pollen and trichomes. Observed in leaves, roots, siliques and flowers.

The protein localises to the endoplasmic reticulum membrane. The catalysed reaction is 4,4-dimethyl-5alpha-cholest-7-en-3beta-ol + 6 Fe(II)-[cytochrome b5] + 3 O2 + 5 H(+) = 4alpha-carboxy-4beta-methyl-5alpha-cholest-7-ene-3beta-ol + 6 Fe(III)-[cytochrome b5] + 4 H2O. The enzyme catalyses 24-methylenecycloartanol + 6 Fe(II)-[cytochrome b5] + 3 O2 + 5 H(+) = 4alpha-carboxy-4beta,14alpha-dimethyl-9beta,19-cyclo-5alpha-ergost-24(24(1))-en-3beta-ol + 6 Fe(III)-[cytochrome b5] + 4 H2O. Functionally, non-heme iron oxygenase involved in sterols biosynthesis by catalyzing the removal of the first methyl group at the C-4 position. 4,4-dimethyl-9-beta,19-cyclopropylsterols such as 24-methylenecycloartanol are the preferred substrates. Acts as a rate-limiting enzyme in the sterol pathway via interaction with ACBP1; sterols serve as lipid modulators for gene expression of homeodomain-leucine zipper IV transcription factors. Together with SMO1-1, involved in the maintenance of sterol composition to balance auxin and cytokinin activities during embryogenesis. The chain is Methylsterol monooxygenase 1-2 from Arabidopsis thaliana (Mouse-ear cress).